Consider the following 305-residue polypeptide: UDP-3-O-acyl-N-acetylglucosamine deacetylase (305 aa).

Zn(2+) is bound by residues His78, His237, and Asp241. His264 functions as the Proton donor in the catalytic mechanism.

Belongs to the LpxC family. The cofactor is Zn(2+).

The enzyme catalyses a UDP-3-O-[(3R)-3-hydroxyacyl]-N-acetyl-alpha-D-glucosamine + H2O = a UDP-3-O-[(3R)-3-hydroxyacyl]-alpha-D-glucosamine + acetate. The protein operates within glycolipid biosynthesis; lipid IV(A) biosynthesis; lipid IV(A) from (3R)-3-hydroxytetradecanoyl-[acyl-carrier-protein] and UDP-N-acetyl-alpha-D-glucosamine: step 2/6. Catalyzes the hydrolysis of UDP-3-O-myristoyl-N-acetylglucosamine to form UDP-3-O-myristoylglucosamine and acetate, the committed step in lipid A biosynthesis. The sequence is that of UDP-3-O-acyl-N-acetylglucosamine deacetylase from Burkholderia mallei (strain NCTC 10247).